The following is an 818-amino-acid chain: Elongation factor G, mitochondrial (818 aa).

A mitochondrion-targeting transit peptide spans 1–23 (MFLGRAASRTCRHSQPLRVAARA). The interval 67–96 (MASTATATKPTEEASSSDQPPAPAHKLTDN) is disordered. The span at 69-85 (STATATKPTEEASSSDQ) shows a compositional bias: polar residues. One can recognise a tr-type G domain in the interval 102-390 (TFQRNIGISA…GVCEYLPNPS (289 aa)). Residues 111-118 (AHIDSGKT), 188-192 (DTPGH), and 242-245 (NKMD) each bind GTP.

This sequence belongs to the TRAFAC class translation factor GTPase superfamily. Classic translation factor GTPase family. EF-G/EF-2 subfamily.

The protein localises to the mitochondrion. It participates in protein biosynthesis; polypeptide chain elongation. Functionally, mitochondrial GTPase that catalyzes the GTP-dependent ribosomal translocation step during translation elongation. During this step, the ribosome changes from the pre-translocational (PRE) to the post-translocational (POST) state as the newly formed A-site-bound peptidyl-tRNA and P-site-bound deacylated tRNA move to the P and E sites, respectively. Catalyzes the coordinated movement of the two tRNA molecules, the mRNA and conformational changes in the ribosome. The chain is Elongation factor G, mitochondrial from Coprinopsis cinerea (strain Okayama-7 / 130 / ATCC MYA-4618 / FGSC 9003) (Inky cap fungus).